The following is a 437-amino-acid chain: Enolase 1 (437 aa).

Residue Q164 coordinates (2R)-2-phosphoglycerate. E206 (proton donor) is an active-site residue. Mg(2+) contacts are provided by D244, E289, and D316. K341, R370, S371, and K392 together coordinate (2R)-2-phosphoglycerate. K341 functions as the Proton acceptor in the catalytic mechanism.

It belongs to the enolase family. The cofactor is Mg(2+).

The protein resides in the cytoplasm. The protein localises to the secreted. Its subcellular location is the cell surface. It carries out the reaction (2R)-2-phosphoglycerate = phosphoenolpyruvate + H2O. It participates in carbohydrate degradation; glycolysis; pyruvate from D-glyceraldehyde 3-phosphate: step 4/5. Functionally, catalyzes the reversible conversion of 2-phosphoglycerate (2-PG) into phosphoenolpyruvate (PEP). It is essential for the degradation of carbohydrates via glycolysis. This chain is Enolase 1, found in Desulfitobacterium hafniense (strain Y51).